Here is a 122-residue protein sequence, read N- to C-terminus: MIQQESRLKVADNTGAKEILCIRVLGGSGRRYAGIGDVIVATVKDAIPGGNVKRGDVVKAVIVRTVKERRRADGSYIRFDENAAVIIKNDNDPRGTRIFGPVGRELREKKFMKIVSLAPEVL.

Belongs to the universal ribosomal protein uL14 family. As to quaternary structure, part of the 50S ribosomal subunit. Forms a cluster with proteins L3 and L19. In the 70S ribosome, L14 and L19 interact and together make contacts with the 16S rRNA in bridges B5 and B8.

Functionally, binds to 23S rRNA. Forms part of two intersubunit bridges in the 70S ribosome. This chain is Large ribosomal subunit protein uL14, found in Mycolicibacterium gilvum (strain PYR-GCK) (Mycobacterium gilvum (strain PYR-GCK)).